Reading from the N-terminus, the 444-residue chain is Type VI secretion system baseplate component TssK1 (444 aa).

As to quaternary structure, forms transient higher-order structures that correlated with dynamics of sheath component TssB1. Interacts with TssA1.

Functionally, core component of the H1 type VI (H1-T6SS) secretion system that plays a role in the release of toxins targeting both eukaryotic and prokaryotic species. Functions as a spatio-temporal marker for assembly of contractile apparatus made of TssB1 and TssC1. This role in assembly depends on TssM1. The chain is Type VI secretion system baseplate component TssK1 from Pseudomonas aeruginosa (strain ATCC 15692 / DSM 22644 / CIP 104116 / JCM 14847 / LMG 12228 / 1C / PRS 101 / PAO1).